The following is a 621-amino-acid chain: MTLDISKYPTLALAETPDELRLLPKETLPTLCDELRTYLLNSVSQSSGHLASGLGTVELTVALHYVYNTPFDQLIWDVGHQAYPHKILTGRREQMPTIRQKGGLHPFPWREESEYDTLSVGHSSTSISAALGMAICAEKEGQNRKVVSVIGDGAITAGMAFEAMNHAGDVHSDMLVILNDNEMSISENVGALNNHLARVLSGNLYTSIREGGKKVLSGVPPIKELVRRTEEHLKGMVVPGTLFEELGFNYIGPIDGHDVVELVKTLKNMRELKGPQFLHIMTKKGKGYEPAEKDPIGYHGVPKFDPAHNSLPKSSGGKPSFSNIFGDFLCDMAAQDPKLMAITPAMREGSGMVRFSKEYPEQYFDVAIAEQHAVTLATGMAIGGYNPIVAIYSTFLQRGYDQLIHDVAIMNLPVMFAIDRAGLVGADGQTHQGAFDLSYMRCIPNMVIMAPSDENECRQMLYTGHKHQGPSAVRYPRGNGMGTPIESEFTALEIGKGRLVRQGEKVAILSFGTFLANALEAAEALNATVADMRFVKPLDEALLRQLANEHDVLITIEENAIAGGAGAGVIEFMMQEKIMKPVLNLGLPDKFIHQGTQEELHEELGLDAKGIEQAIRHYLAK.

Thiamine diphosphate is bound by residues His80 and 121–123 (GHS). Residue Asp152 coordinates Mg(2+). Thiamine diphosphate is bound by residues 153–154 (GA), Asn181, Tyr288, and Glu370. Asn181 provides a ligand contact to Mg(2+).

Belongs to the transketolase family. DXPS subfamily. Homodimer. The cofactor is Mg(2+). It depends on thiamine diphosphate as a cofactor.

It carries out the reaction D-glyceraldehyde 3-phosphate + pyruvate + H(+) = 1-deoxy-D-xylulose 5-phosphate + CO2. The protein operates within metabolic intermediate biosynthesis; 1-deoxy-D-xylulose 5-phosphate biosynthesis; 1-deoxy-D-xylulose 5-phosphate from D-glyceraldehyde 3-phosphate and pyruvate: step 1/1. Its function is as follows. Catalyzes the acyloin condensation reaction between C atoms 2 and 3 of pyruvate and glyceraldehyde 3-phosphate to yield 1-deoxy-D-xylulose-5-phosphate (DXP). This chain is 1-deoxy-D-xylulose-5-phosphate synthase, found in Vibrio vulnificus (strain CMCP6).